A 525-amino-acid polypeptide reads, in one-letter code: GMP synthase [glutamine-hydrolyzing] (525 aa).

Residues 9 to 207 (RILILDFGSQ…VLDICGCAAL (199 aa)) enclose the Glutamine amidotransferase type-1 domain. Cys-86 acts as the Nucleophile in catalysis. Active-site residues include His-181 and Glu-183. The GMPS ATP-PPase domain occupies 208–400 (WTPSNIVDDA…LGLPYDMVYR (193 aa)). 235–241 (SGGVDSS) contributes to the ATP binding site.

Homodimer.

It carries out the reaction XMP + L-glutamine + ATP + H2O = GMP + L-glutamate + AMP + diphosphate + 2 H(+). It functions in the pathway purine metabolism; GMP biosynthesis; GMP from XMP (L-Gln route): step 1/1. Its function is as follows. Catalyzes the synthesis of GMP from XMP. This is GMP synthase [glutamine-hydrolyzing] from Pseudomonas aeruginosa (strain UCBPP-PA14).